The following is a 179-amino-acid chain: Large ribosomal subunit protein uL6 (179 aa).

This sequence belongs to the universal ribosomal protein uL6 family. Part of the 50S ribosomal subunit.

Functionally, this protein binds to the 23S rRNA, and is important in its secondary structure. It is located near the subunit interface in the base of the L7/L12 stalk, and near the tRNA binding site of the peptidyltransferase center. This chain is Large ribosomal subunit protein uL6, found in Bacillus subtilis (strain 168).